A 267-amino-acid chain; its full sequence is Cell cycle checkpoint protein RAD1 homolog mrt-2 (267 aa).

This sequence belongs to the Rad1 family. Probable component of the toroidal 9-1-1 (RAD9-RAD1-HUS1) complex, composed of hpr-9, mrt-2 and hus-1. Interacts with hus-1. Might associate with hpr-9.

Its subcellular location is the nucleus. The catalysed reaction is Exonucleolytic cleavage in the 3'- to 5'-direction to yield nucleoside 5'-phosphates.. In terms of biological role, may be a component of the 9-1-1 cell-cycle checkpoint response complex that plays a major role in DNA repair. Promotes DNA double strand break-induced cell cycle arrest and apoptosis, thereby playing a role in genome stability. Also required for telomere length maintenance and germline immortality. May possess 3'-&gt;5' double stranded DNA exonuclease activity. This is Cell cycle checkpoint protein RAD1 homolog mrt-2 from Caenorhabditis elegans.